A 413-amino-acid polypeptide reads, in one-letter code: CinA-like protein (413 aa).

It belongs to the CinA family.

The protein is CinA-like protein of Geobacter metallireducens (strain ATCC 53774 / DSM 7210 / GS-15).